Here is a 578-residue protein sequence, read N- to C-terminus: 2-succinyl-5-enolpyruvyl-6-hydroxy-3-cyclohexene-1-carboxylate synthase (578 aa).

Belongs to the TPP enzyme family. MenD subfamily. Homodimer. The cofactor is Mg(2+). Mn(2+) serves as cofactor. Requires thiamine diphosphate as cofactor.

The enzyme catalyses isochorismate + 2-oxoglutarate + H(+) = 5-enolpyruvoyl-6-hydroxy-2-succinyl-cyclohex-3-ene-1-carboxylate + CO2. Its pathway is quinol/quinone metabolism; 1,4-dihydroxy-2-naphthoate biosynthesis; 1,4-dihydroxy-2-naphthoate from chorismate: step 2/7. It participates in quinol/quinone metabolism; menaquinone biosynthesis. Its function is as follows. Catalyzes the thiamine diphosphate-dependent decarboxylation of 2-oxoglutarate and the subsequent addition of the resulting succinic semialdehyde-thiamine pyrophosphate anion to isochorismate to yield 2-succinyl-5-enolpyruvyl-6-hydroxy-3-cyclohexene-1-carboxylate (SEPHCHC). The protein is 2-succinyl-5-enolpyruvyl-6-hydroxy-3-cyclohexene-1-carboxylate synthase of Prosthecochloris aestuarii (strain DSM 271 / SK 413).